Reading from the N-terminus, the 199-residue chain is Alpha-D-glucose 1-phosphate phosphatase YihX (199 aa).

D6 (nucleophile) is an active-site residue. Residue D6 coordinates Mg(2+). Substrate is bound by residues D6 to G8, S107 to N108, K141, and D166. D166 provides a ligand contact to Mg(2+).

Belongs to the HAD-like hydrolase superfamily. YihX family. Requires Mg(2+) as cofactor. Mn(2+) serves as cofactor. Co(2+) is required as a cofactor. It depends on Zn(2+) as a cofactor.

The enzyme catalyses alpha-D-glucose 1-phosphate + H2O = D-glucose + phosphate. Catalyzes the dephosphorylation of alpha-D-glucose 1-phosphate (Glc1P) and, to a lesser extent, of other sugar phosphates. Has no activity with the beta form of Glc1P. In addition, YihX has significant phosphatase activity against pyridoxal phosphate (PLP) and low beta-phosphoglucomutase activity. The polypeptide is Alpha-D-glucose 1-phosphate phosphatase YihX (yihX) (Escherichia coli (strain K12)).